A 402-amino-acid polypeptide reads, in one-letter code: Protein arginine methyltransferase NDUFAF7 homolog, mitochondrial (402 aa).

The protein belongs to the NDUFAF7 family.

The protein resides in the mitochondrion. The enzyme catalyses L-arginyl-[protein] + 2 S-adenosyl-L-methionine = N(omega),N(omega)'-dimethyl-L-arginyl-[protein] + 2 S-adenosyl-L-homocysteine + 2 H(+). Its function is as follows. Arginine methyltransferase involved in the assembly or stability of mitochondrial NADH:ubiquinone oxidoreductase complex (complex I). The chain is Protein arginine methyltransferase NDUFAF7 homolog, mitochondrial from Saccharomyces cerevisiae (strain ATCC 204508 / S288c) (Baker's yeast).